Consider the following 99-residue polypeptide: Protein dpy-30 homolog (99 aa).

An N-acetylmethionine modification is found at M1. The interval 1 to 26 (MESEQMLEGQTQVAENPHSEYGLTDS) is disordered. S19 is modified (phosphoserine). Position 35 is an N6-acetyllysine; alternate (K35). A Glycyl lysine isopeptide (Lys-Gly) (interchain with G-Cter in SUMO2); alternate cross-link involves residue K35.

The protein belongs to the dpy-30 family. Homodimer. Core component of several methyltransferase-containing complexes including MLL1/MLL, MLL2/3 (also named ASCOM complex) and MLL4/WBP7. Each complex is at least composed of ASH2L, RBBP5, WDR5, DPY30, one or more specific histone methyltransferases (KMT2A/MLL1, KMT2D/MLL2, KMT2C/MLL3 and KMT2B/MLL4), and the facultative components MEN1, HCFC1, HCFC2, NCOA6, KDM6A, PAXIP1/PTIP, PAGR1 and alpha- and beta-tubulin PAXIP1/PTIP, PAGR1 and alpha- and beta-tubulin. Interacts with ASH2L. The interaction with ASH2L is direct. Interacts with ARFGEF1. Component of the SET1 complex, at least composed of the catalytic subunit (SETD1A or SETD1B), WDR5, WDR82, RBBP5, ASH2L/ASH2, CXXC1/CFP1, HCFC1 and DPY30.

Its subcellular location is the nucleus. It is found in the golgi apparatus. The protein resides in the trans-Golgi network. Its function is as follows. As part of the MLL1/MLL complex, involved in the methylation of histone H3 at 'Lys-4', particularly trimethylation. Histone H3 'Lys-4' methylation represents a specific tag for epigenetic transcriptional activation. May play some role in histone H3 acetylation. In embryonic stem (ES) cells, plays a crucial role in the differentiation potential, particularly along the neural lineage, regulating gene induction and histone H3 'Lys-4' methylation at key developmental loci, including that mediated by retinoic acid. Does not affect ES cell self-renewal. May also play an indirect or direct role in endosomal transport. The polypeptide is Protein dpy-30 homolog (Dpy30) (Mus musculus (Mouse)).